Consider the following 395-residue polypeptide: NAD(P)H-quinone oxidoreductase subunit H, chloroplastic (395 aa).

It belongs to the complex I 49 kDa subunit family. In terms of assembly, NDH is composed of at least 16 different subunits, 5 of which are encoded in the nucleus.

It is found in the plastid. The protein localises to the chloroplast thylakoid membrane. The enzyme catalyses a plastoquinone + NADH + (n+1) H(+)(in) = a plastoquinol + NAD(+) + n H(+)(out). It catalyses the reaction a plastoquinone + NADPH + (n+1) H(+)(in) = a plastoquinol + NADP(+) + n H(+)(out). Its function is as follows. NDH shuttles electrons from NAD(P)H:plastoquinone, via FMN and iron-sulfur (Fe-S) centers, to quinones in the photosynthetic chain and possibly in a chloroplast respiratory chain. The immediate electron acceptor for the enzyme in this species is believed to be plastoquinone. Couples the redox reaction to proton translocation, and thus conserves the redox energy in a proton gradient. The protein is NAD(P)H-quinone oxidoreductase subunit H, chloroplastic of Dioscorea elephantipes (Elephant's foot yam).